A 198-amino-acid chain; its full sequence is Secreted RxLR effector protein PITG_22926 (198 aa).

The first 20 residues, 1–20 (MLRSFLLIVATVSLFGQCKP), serve as a signal peptide directing secretion. The short motif at 43-52 (RFLRTNDEER) is the RxLR-dEER element.

This sequence belongs to the RxLR effector family. Interacts with host MAP3Kbeta2 in the nucleoplasm.

It localises to the secreted. The protein resides in the host nucleus. Its subcellular location is the host nucleolus. Functionally, secreted effector that promotes P.infestans colonization of plant host. Specifically suppresses Avr4/Cf4- and AvrPto/Pto-triggered cell death. Targets the potato MAP3Kbeta2 kinase, a positive regulator of cell death associated with plant immunity, and perturbs signaling pathways triggered by MAP3Kbeta2. The chain is Secreted RxLR effector protein PITG_22926 from Phytophthora infestans (strain T30-4) (Potato late blight agent).